We begin with the raw amino-acid sequence, 246 residues long: Cell division protein ZapD (246 aa).

It belongs to the ZapD family. In terms of assembly, interacts with FtsZ.

It localises to the cytoplasm. Cell division factor that enhances FtsZ-ring assembly. Directly interacts with FtsZ and promotes bundling of FtsZ protofilaments, with a reduction in FtsZ GTPase activity. The chain is Cell division protein ZapD from Vibrio atlanticus (strain LGP32) (Vibrio splendidus (strain Mel32)).